We begin with the raw amino-acid sequence, 777 residues long: Endonuclease MutS2 (777 aa).

328–335 contributes to the ATP binding site; it reads GPNTGGKT. The region spanning 702 to 777 is the Smr domain; the sequence is LDLRGKRYEE…GSGATIVIFK (76 aa).

This sequence belongs to the DNA mismatch repair MutS family. MutS2 subfamily. As to quaternary structure, homodimer. Binds to stalled ribosomes, contacting rRNA.

Endonuclease that is involved in the suppression of homologous recombination and thus may have a key role in the control of bacterial genetic diversity. Its function is as follows. Acts as a ribosome collision sensor, splitting the ribosome into its 2 subunits. Detects stalled/collided 70S ribosomes which it binds and splits by an ATP-hydrolysis driven conformational change. Acts upstream of the ribosome quality control system (RQC), a ribosome-associated complex that mediates the extraction of incompletely synthesized nascent chains from stalled ribosomes and their subsequent degradation. Probably generates substrates for RQC. The polypeptide is Endonuclease MutS2 (Streptococcus sanguinis (strain SK36)).